We begin with the raw amino-acid sequence, 349 residues long: Isopentenyl-diphosphate delta-isomerase (349 aa).

9-10 (RK) provides a ligand contact to substrate. FMN-binding positions include 65 to 67 (AMT), serine 95, and asparagine 124. Position 95–97 (95–97 (STH)) interacts with substrate. Glutamine 154 serves as a coordination point for substrate. Glutamate 155 contributes to the Mg(2+) binding site. Residues lysine 186, serine 211, threonine 216, 262–264 (GVR), and 283–284 (SR) contribute to the FMN site.

Belongs to the IPP isomerase type 2 family. Homooctamer. Dimer of tetramers. It depends on FMN as a cofactor. The cofactor is NADPH. Mg(2+) serves as cofactor.

It localises to the cytoplasm. It carries out the reaction isopentenyl diphosphate = dimethylallyl diphosphate. Involved in the biosynthesis of isoprenoids. Catalyzes the 1,3-allylic rearrangement of the homoallylic substrate isopentenyl (IPP) to its allylic isomer, dimethylallyl diphosphate (DMAPP). This is Isopentenyl-diphosphate delta-isomerase from Staphylococcus haemolyticus (strain JCSC1435).